A 666-amino-acid chain; its full sequence is Probable potassium transport system protein Kup (666 aa).

A run of 12 helical transmembrane segments spans residues 16-36 (GFIIALGIVYGDIGTSPLYTM), 58-78 (ISLIIWTLTLITTIKYVLIAL), 100-120 (PWLIVPAMIGGATLLSDGALT), 149-169 (IITTLVILIVLFGIQRFGTGF), 173-193 (IFGPVMFIWFSFLGVSGFFNM), 221-241 (IFILGSIFLATTGAEALYSDL), 253-273 (WPFVKMCIVLSYCGQAAWILA), 294-314 (VYLVSLATLAAIIASQALISG), 343-363 (LYIPVINWILFAVTSCTVLAF), 373-393 (YGLAITITMLMTTILLKYYLI), 399-419 (PILAHLVMAFFALVEFIFFLA), and 424-444 (FMHGGYAVVILALAIVFVMFI).

Belongs to the HAK/KUP transporter (TC 2.A.72) family.

Its subcellular location is the cell membrane. The enzyme catalyses K(+)(in) + H(+)(in) = K(+)(out) + H(+)(out). Functionally, transport of potassium into the cell. Likely operates as a K(+):H(+) symporter. The sequence is that of Probable potassium transport system protein Kup from Streptococcus pyogenes serotype M3 (strain ATCC BAA-595 / MGAS315).